A 141-amino-acid chain; its full sequence is Hemoglobin subunit alpha (141 aa).

The region spanning valine 1–arginine 141 is the Globin domain. Serine 3 is modified (phosphoserine). N6-succinyllysine occurs at positions 7 and 11. An N6-acetyllysine; alternate modification is found at lysine 16. Lysine 16 carries the N6-succinyllysine; alternate modification. Tyrosine 24 is subject to Phosphotyrosine. The residue at position 35 (serine 35) is a Phosphoserine. Residue lysine 40 is modified to N6-succinyllysine. A Phosphoserine modification is found at serine 49. Histidine 58 is an O2 binding site. Residue histidine 87 participates in heme b binding. Serine 102 is modified (phosphoserine). At threonine 108 the chain carries Phosphothreonine. A phosphoserine mark is found at serine 124 and serine 131. A phosphothreonine mark is found at threonine 134 and threonine 137. Serine 138 is modified (phosphoserine).

Belongs to the globin family. As to quaternary structure, heterotetramer of two alpha chains and two beta chains. Red blood cells.

Involved in oxygen transport from the lung to the various peripheral tissues. Functionally, hemopressin acts as an antagonist peptide of the cannabinoid receptor CNR1. Hemopressin-binding efficiently blocks cannabinoid receptor CNR1 and subsequent signaling. This chain is Hemoglobin subunit alpha (HBA), found in Theropithecus gelada (Gelada baboon).